The following is a 314-amino-acid chain: Ribosomal RNA small subunit methyltransferase H (314 aa).

S-adenosyl-L-methionine is bound by residues 34–36 (GGH), aspartate 53, phenylalanine 82, aspartate 103, and glutamine 110.

It belongs to the methyltransferase superfamily. RsmH family.

It localises to the cytoplasm. It carries out the reaction cytidine(1402) in 16S rRNA + S-adenosyl-L-methionine = N(4)-methylcytidine(1402) in 16S rRNA + S-adenosyl-L-homocysteine + H(+). In terms of biological role, specifically methylates the N4 position of cytidine in position 1402 (C1402) of 16S rRNA. The polypeptide is Ribosomal RNA small subunit methyltransferase H (Levilactobacillus brevis (strain ATCC 367 / BCRC 12310 / CIP 105137 / JCM 1170 / LMG 11437 / NCIMB 947 / NCTC 947) (Lactobacillus brevis)).